We begin with the raw amino-acid sequence, 235 residues long: Ribonuclease PH (235 aa).

Phosphate is bound by residues arginine 86 and 124 to 126 (GTR).

Belongs to the RNase PH family. As to quaternary structure, homohexameric ring arranged as a trimer of dimers.

The enzyme catalyses tRNA(n+1) + phosphate = tRNA(n) + a ribonucleoside 5'-diphosphate. Its function is as follows. Phosphorolytic 3'-5' exoribonuclease that plays an important role in tRNA 3'-end maturation. Removes nucleotide residues following the 3'-CCA terminus of tRNAs; can also add nucleotides to the ends of RNA molecules by using nucleoside diphosphates as substrates, but this may not be physiologically important. Probably plays a role in initiation of 16S rRNA degradation (leading to ribosome degradation) during starvation. The chain is Ribonuclease PH from Legionella pneumophila (strain Corby).